Reading from the N-terminus, the 53-residue chain is Rubredoxin 3 (53 aa).

In terms of domain architecture, Rubredoxin-like spans 1–53 (MQKWVCVPCGYEYDPADGDPENGIEPGTAFEDLPEDWVCPVCGVDKSFFEPVS). The Fe cation site is built by Cys-6, Cys-9, Cys-39, and Cys-42.

The protein belongs to the rubredoxin family. In terms of assembly, monomer. Fe(3+) serves as cofactor.

In terms of biological role, functions as an electron acceptor for pyruvate ferredoxin oxidoreductase (PFOR). This Chlorobaculum tepidum (strain ATCC 49652 / DSM 12025 / NBRC 103806 / TLS) (Chlorobium tepidum) protein is Rubredoxin 3 (rub3).